We begin with the raw amino-acid sequence, 117 residues long: Large ribosomal subunit protein uL22 (117 aa).

It belongs to the universal ribosomal protein uL22 family. In terms of assembly, part of the 50S ribosomal subunit.

Functionally, this protein binds specifically to 23S rRNA; its binding is stimulated by other ribosomal proteins, e.g. L4, L17, and L20. It is important during the early stages of 50S assembly. It makes multiple contacts with different domains of the 23S rRNA in the assembled 50S subunit and ribosome. Its function is as follows. The globular domain of the protein is located near the polypeptide exit tunnel on the outside of the subunit, while an extended beta-hairpin is found that lines the wall of the exit tunnel in the center of the 70S ribosome. The polypeptide is Large ribosomal subunit protein uL22 (Staphylococcus aureus (strain USA300)).